The following is a 353-amino-acid chain: Guanine nucleotide-binding protein subunit alpha (353 aa).

Residues 1–21 (MGCGMSTEEKEGKARNEEIEN) form a disordered region. Gly2 is lipidated: N-myristoyl glycine. Cys3 carries S-palmitoyl cysteine lipidation. Residues 7–21 (TEEKEGKARNEEIEN) are compositionally biased toward basic and acidic residues. In terms of domain architecture, G-alpha spans 32–353 (NEIKMLLLGA…QENLRLCGLI (322 aa)). A G1 motif region spans residues 35-48 (KMLLLGAGESGKST). Residues Glu43, Ser44, Gly45, Lys46, Ser47, Thr48, Asp150, Leu175, Thr181, Gly203, Asn269, Lys270, Asp272, and Ala325 each coordinate GTP. Ser47 lines the Mg(2+) pocket. The tract at residues 173 to 181 (DVLRSRVKT) is G2 motif. Thr181 provides a ligand contact to Mg(2+). The G3 motif stretch occupies residues 196-205 (YRMFDVGGQR). The tract at residues 265–272 (ILFLNKID) is G4 motif. Positions 323-328 (TCATDT) are G5 motif.

This sequence belongs to the G-alpha family. G(q) subfamily. In terms of assembly, g proteins are composed of 3 units; alpha, beta and gamma. The alpha chain contains the guanine nucleotide binding site. The cofactor is Mg(2+).

In terms of biological role, guanine nucleotide-binding proteins (G proteins) are involved as modulators or transducers in various transmembrane signaling systems. Plays a role in pathogenicity, specifically in appressorium formation in rice blast disease. Also involved in mating. This chain is Guanine nucleotide-binding protein subunit alpha (MAGB), found in Pyricularia oryzae (strain 70-15 / ATCC MYA-4617 / FGSC 8958) (Rice blast fungus).